We begin with the raw amino-acid sequence, 365 residues long: Heme A synthase (365 aa).

8 helical membrane passes run 17–37, 107–127, 132–152, 164–184, 203–223, 264–283, 296–316, and 320–340; these read AVRI…LVGG, VIGI…AIGP, ALWG…WMVA, VRLA…VWTL, AIAL…VAGL, QFDH…WHAI, GALW…LTVL, and PIGL…LAVL. Heme is bound at residue His267. Heme is bound at residue His327.

The protein belongs to the COX15/CtaA family. Type 2 subfamily. As to quaternary structure, interacts with CtaB. Heme b serves as cofactor.

Its subcellular location is the cell membrane. The enzyme catalyses Fe(II)-heme o + 2 A + H2O = Fe(II)-heme a + 2 AH2. It functions in the pathway porphyrin-containing compound metabolism; heme A biosynthesis; heme A from heme O: step 1/1. Catalyzes the conversion of heme O to heme A by two successive hydroxylations of the methyl group at C8. The first hydroxylation forms heme I, the second hydroxylation results in an unstable dihydroxymethyl group, which spontaneously dehydrates, resulting in the formyl group of heme A. The protein is Heme A synthase of Rhodopseudomonas palustris (strain HaA2).